Consider the following 161-residue polypeptide: Transcription elongation factor GreA (161 aa).

A coiled-coil region spans residues 45–72 (NAEYHSAKEKLKLIDIQIAELNAVISKA).

The protein belongs to the GreA/GreB family.

Functionally, necessary for efficient RNA polymerase transcription elongation past template-encoded arresting sites. The arresting sites in DNA have the property of trapping a certain fraction of elongating RNA polymerases that pass through, resulting in locked ternary complexes. Cleavage of the nascent transcript by cleavage factors such as GreA or GreB allows the resumption of elongation from the new 3'terminus. GreA releases sequences of 2 to 3 nucleotides. This Aliarcobacter butzleri (strain RM4018) (Arcobacter butzleri) protein is Transcription elongation factor GreA.